We begin with the raw amino-acid sequence, 612 residues long: MEFSRETRRLALQKMQERDLDLLIIGGGITGAGVALQAAASGLDTGLIEMQDFAQGTSSRSTKLVHGGLRYLKQFDVEVVSDTVSERAVVQQIAPHIPKPDPMLLPVYDEPGSTFSMFRLKVAMDLYDLLAGVSNMPAANKVLTKEEVLKREPDLKQEGLLGGGVYLDFRNNDARLVIENIKRANRDGALIASHVKAEDFLLDDNSKIIGVKARDLLSDQEIIIKAKLVINTTGPWSDEIRQFSHKGQPIHQMRPTKGVHLVVDRQKLPVSQPVYVDTGLNDGRMVFVLPREEKTYFGTTDTDYTGDLEHPQVTQEDVDYLLGVVNNRFPNANVTIDDIESSWAGLRPLLSGNSASDYNGGNSGKVSDDSFDHLVDTVKAYINHEDSREAVEKAIKQVETSTSEKELDPSAVSRGSSFDRDENGLFTLAGGKITDYRKMAEGALTGIIQILKEEFGKSFKLINSKTYPVSGGEINPANVDSEIEAYAQLGTLSGLSMDDARYLANLYGSNAPKVFALTRQLTAAEGLSLAETLSLHYAMDYEMALKPTDYFLRRTNHLLFMRDSLDALIDPVIKEMAKHFEWSDQERVAQEDDLRRVIADNDLSALKGQQEG.

21–49 provides a ligand contact to FAD; it reads DLLIIGGGITGAGVALQAAASGLDTGLIE. Positions 398–408 are enriched in basic and acidic residues; sequence VETSTSEKELD. Residues 398 to 418 are disordered; the sequence is VETSTSEKELDPSAVSRGSSF.

Belongs to the FAD-dependent glycerol-3-phosphate dehydrogenase family. FAD serves as cofactor.

It is found in the cytoplasm. The catalysed reaction is sn-glycerol 3-phosphate + O2 = dihydroxyacetone phosphate + H2O2. The polypeptide is Alpha-glycerophosphate oxidase (glpO) (Streptococcus pyogenes serotype M18 (strain MGAS8232)).